Reading from the N-terminus, the 540-residue chain is Glucose-6-phosphate isomerase (540 aa).

The active-site Proton donor is the E346. Residues H377 and K505 contribute to the active site.

It belongs to the GPI family.

Its subcellular location is the cytoplasm. It catalyses the reaction alpha-D-glucose 6-phosphate = beta-D-fructose 6-phosphate. The protein operates within carbohydrate biosynthesis; gluconeogenesis. It functions in the pathway carbohydrate degradation; glycolysis; D-glyceraldehyde 3-phosphate and glycerone phosphate from D-glucose: step 2/4. Functionally, catalyzes the reversible isomerization of glucose-6-phosphate to fructose-6-phosphate. This Francisella tularensis subsp. holarctica (strain FTNF002-00 / FTA) protein is Glucose-6-phosphate isomerase.